Consider the following 416-residue polypeptide: Glutamyl-tRNA reductase (416 aa).

Residues 51–54 (TCNR), Ser110, 115–117 (EPQ), and Gln121 each bind substrate. Residue Cys52 is the Nucleophile of the active site. 190 to 195 (GAGQTG) is a binding site for NADP(+).

The protein belongs to the glutamyl-tRNA reductase family. Homodimer.

The enzyme catalyses (S)-4-amino-5-oxopentanoate + tRNA(Glu) + NADP(+) = L-glutamyl-tRNA(Glu) + NADPH + H(+). It functions in the pathway porphyrin-containing compound metabolism; protoporphyrin-IX biosynthesis; 5-aminolevulinate from L-glutamyl-tRNA(Glu): step 1/2. Functionally, catalyzes the NADPH-dependent reduction of glutamyl-tRNA(Glu) to glutamate 1-semialdehyde (GSA). The sequence is that of Glutamyl-tRNA reductase from Francisella tularensis subsp. tularensis (strain FSC 198).